A 506-amino-acid chain; its full sequence is Glycine--tRNA ligase (506 aa).

Positions 99 and 189 each coordinate substrate. Residues 221 to 223, 231 to 236, 306 to 307, and 365 to 368 each bind ATP; these read RNE, FRVREL, EI, and GVDR. 236–240 is a substrate binding site; sequence LEQME. 361–365 serves as a coordination point for substrate; it reads EPSAG.

It belongs to the class-II aminoacyl-tRNA synthetase family. Homodimer.

Its subcellular location is the cytoplasm. The catalysed reaction is tRNA(Gly) + glycine + ATP = glycyl-tRNA(Gly) + AMP + diphosphate. Functionally, catalyzes the attachment of glycine to tRNA(Gly). The polypeptide is Glycine--tRNA ligase (Deinococcus radiodurans (strain ATCC 13939 / DSM 20539 / JCM 16871 / CCUG 27074 / LMG 4051 / NBRC 15346 / NCIMB 9279 / VKM B-1422 / R1)).